The chain runs to 171 residues: Photosystem I assembly protein Ycf3 (171 aa).

TPR repeat units lie at residues 33–66, 70–103, and 118–151; these read AFSY…EEDP, SYIL…NSRL, and GTKS…APNN.

This sequence belongs to the Ycf3 family.

The protein localises to the plastid. It is found in the chloroplast thylakoid membrane. Functionally, essential for the assembly of the photosystem I (PSI) complex. May act as a chaperone-like factor to guide the assembly of the PSI subunits. This Emiliania huxleyi (Coccolithophore) protein is Photosystem I assembly protein Ycf3.